The chain runs to 350 residues: MSAERLVNPHSDSDDQQVEKSLRPRTLSEFIGQEKVVEQLRIAIAAARGRNEALDHTLFYGPPGLGKTSLANVVANEMGAKIKITSGPAIERAGDLAAILTNLQPNDVLFIDEVHRLNRAVEEVLYPAMEDFALDLVVGKGPGARSLRLNLPRFTVIGATTRLALLTSPLRDRFVAVHRLVFYSDAAMTEIVSRSARILGVPISPEGAREIGRRARGTPRIANRILRRVRDYAQVVANGEITLAVAREALAQLEIDELGLDENDRRLLRAIIELFNGGPVGLNTLAAALAEEVDAIEDVYEPFLLQLGFLQRTPRGRVATRRAYEHLGLPFPERSLPLEDESGPQQGTLF.

Residues 1–183 are large ATPase domain (RuvB-L); the sequence is MSAERLVNPH…FVAVHRLVFY (183 aa). ATP is bound by residues leucine 22, arginine 23, glycine 64, lysine 67, threonine 68, serine 69, 130–132, arginine 173, tyrosine 183, and arginine 220; that span reads EDF. Residue threonine 68 participates in Mg(2+) binding. The small ATPAse domain (RuvB-S) stretch occupies residues 184–254; sequence SDAAMTEIVS…VAREALAQLE (71 aa). Residues 257-350 are head domain (RuvB-H); sequence ELGLDENDRR…ESGPQQGTLF (94 aa). DNA contacts are provided by arginine 312 and arginine 317.

The protein belongs to the RuvB family. In terms of assembly, homohexamer. Forms an RuvA(8)-RuvB(12)-Holliday junction (HJ) complex. HJ DNA is sandwiched between 2 RuvA tetramers; dsDNA enters through RuvA and exits via RuvB. An RuvB hexamer assembles on each DNA strand where it exits the tetramer. Each RuvB hexamer is contacted by two RuvA subunits (via domain III) on 2 adjacent RuvB subunits; this complex drives branch migration. In the full resolvosome a probable DNA-RuvA(4)-RuvB(12)-RuvC(2) complex forms which resolves the HJ.

It localises to the cytoplasm. The catalysed reaction is ATP + H2O = ADP + phosphate + H(+). Its function is as follows. The RuvA-RuvB-RuvC complex processes Holliday junction (HJ) DNA during genetic recombination and DNA repair, while the RuvA-RuvB complex plays an important role in the rescue of blocked DNA replication forks via replication fork reversal (RFR). RuvA specifically binds to HJ cruciform DNA, conferring on it an open structure. The RuvB hexamer acts as an ATP-dependent pump, pulling dsDNA into and through the RuvAB complex. RuvB forms 2 homohexamers on either side of HJ DNA bound by 1 or 2 RuvA tetramers; 4 subunits per hexamer contact DNA at a time. Coordinated motions by a converter formed by DNA-disengaged RuvB subunits stimulates ATP hydrolysis and nucleotide exchange. Immobilization of the converter enables RuvB to convert the ATP-contained energy into a lever motion, pulling 2 nucleotides of DNA out of the RuvA tetramer per ATP hydrolyzed, thus driving DNA branch migration. The RuvB motors rotate together with the DNA substrate, which together with the progressing nucleotide cycle form the mechanistic basis for DNA recombination by continuous HJ branch migration. Branch migration allows RuvC to scan DNA until it finds its consensus sequence, where it cleaves and resolves cruciform DNA. The protein is Holliday junction branch migration complex subunit RuvB of Chloroflexus aggregans (strain MD-66 / DSM 9485).